The primary structure comprises 292 residues: 4-hydroxy-tetrahydrodipicolinate synthase (292 aa).

T45 provides a ligand contact to pyruvate. Y133 (proton donor/acceptor) is an active-site residue. K161 (schiff-base intermediate with substrate) is an active-site residue. Position 203 (I203) interacts with pyruvate.

Belongs to the DapA family. As to quaternary structure, homotetramer; dimer of dimers.

The protein localises to the cytoplasm. The catalysed reaction is L-aspartate 4-semialdehyde + pyruvate = (2S,4S)-4-hydroxy-2,3,4,5-tetrahydrodipicolinate + H2O + H(+). It functions in the pathway amino-acid biosynthesis; L-lysine biosynthesis via DAP pathway; (S)-tetrahydrodipicolinate from L-aspartate: step 3/4. Catalyzes the condensation of (S)-aspartate-beta-semialdehyde [(S)-ASA] and pyruvate to 4-hydroxy-tetrahydrodipicolinate (HTPA). In Cronobacter sakazakii (strain ATCC BAA-894) (Enterobacter sakazakii), this protein is 4-hydroxy-tetrahydrodipicolinate synthase.